A 422-amino-acid polypeptide reads, in one-letter code: Glucosylglycerol-phosphate phosphatase (422 aa).

Asp-403 functions as the Proton donor in the catalytic mechanism.

The protein belongs to the histidine acid phosphatase family. In terms of assembly, monomer. Interacts with GGPS.

It catalyses the reaction 2-O-(alpha-D-glucopyranosyl)-sn-glycerol 3-phosphate + H2O = 2-O-(alpha-D-glucopyranosyl)glycerol + phosphate. In terms of biological role, phosphorylates glucosylglycerol-phosphate the precursor of the osmoprotectant glucosylglycerol necessary for salt adaptation of Synechocystis. The chain is Glucosylglycerol-phosphate phosphatase (stpA) from Synechocystis sp. (strain ATCC 27184 / PCC 6803 / Kazusa).